A 122-amino-acid chain; its full sequence is MARIAGVNIPSNKRVCIALTYIYGIGRTKAGEICERTGIAENRRVNDLSDDEVVRIREIIDSEYKVEGDLRREVAMNIKRIMDLGCYRGLRHRKGLPVRGQRTHTNARTRKGPAKPIAGKKK.

The segment at 95–122 (GLPVRGQRTHTNARTRKGPAKPIAGKKK) is disordered.

Belongs to the universal ribosomal protein uS13 family. As to quaternary structure, part of the 30S ribosomal subunit. Forms a loose heterodimer with protein S19. Forms two bridges to the 50S subunit in the 70S ribosome.

Located at the top of the head of the 30S subunit, it contacts several helices of the 16S rRNA. In the 70S ribosome it contacts the 23S rRNA (bridge B1a) and protein L5 of the 50S subunit (bridge B1b), connecting the 2 subunits; these bridges are implicated in subunit movement. Contacts the tRNAs in the A and P-sites. This is Small ribosomal subunit protein uS13 from Rhodospirillum rubrum (strain ATCC 11170 / ATH 1.1.1 / DSM 467 / LMG 4362 / NCIMB 8255 / S1).